The primary structure comprises 116 residues: Nucleoid-associated protein P9515_00191 (116 aa).

Residues 89-98 (STTTMKERMN) show a composition bias toward basic and acidic residues. The segment at 89-116 (STTTMKERMNDLTGGLNLNLPGLDNNDS) is disordered. Residues 99–116 (DLTGGLNLNLPGLDNNDS) are compositionally biased toward low complexity.

This sequence belongs to the YbaB/EbfC family. Homodimer.

The protein localises to the cytoplasm. It is found in the nucleoid. Functionally, binds to DNA and alters its conformation. May be involved in regulation of gene expression, nucleoid organization and DNA protection. This chain is Nucleoid-associated protein P9515_00191, found in Prochlorococcus marinus (strain MIT 9515).